The sequence spans 261 residues: Methyltransferase nsrG (261 aa).

Residues 49-141 are methyltransferase domain; it reads DVGAGNGPYA…AHQLRPGALF (93 aa).

The protein belongs to the methyltransferase superfamily.

Its pathway is secondary metabolite biosynthesis. Functionally, methyltransferase; part of the gene cluster that mediates the biosynthesis of the tetrahydroxanthone dimer neosartorin, which exhibits antibacterial activity. The two different monomeric units appear to be synthesized by the same set of enzymes, among which the Baeyer-Villiger monooxygenase nsrF is the key enzyme for the divergence of the biosynthetic routes. The pathway begins with the synthesis of atrochrysone thioester by the polyketide synthase nsrB. The atrochrysone carboxyl ACP thioesterase nsrC then breaks the thioester bond and releases the atrochrysone carboxylic acid from AacuL. Atrochrysone carboxylic acid is decarboxylated by the decarboxylase nsrE, and oxidized by the anthrone oxygenase nsrD to yield emodin. Emodin is then reduced to emodin hydroquinone by the oxidoreductase nsrR. A-ring reduction by the short chain dehydrogenase nsrJ, dehydration by the scytalone dehydratase-like protein nsrI and probable spontaneous re-oxidation, results in overall deoxygenation to chrysophanol. The Baeyer-Villiger monooxygenase nsrF accepts chrysophanol as a substrate to insert one oxygen atom at two different positions to yield the precursors of both monomric units. NsrF is promiscuous/flexible in interacting with the 2 (non methylated and methylated) aromatic rings of chrysophanol, thus diverging the biosynthetic pathway at this point. After the hydrolysis of the lactones, methylesterification by the methyltransferase nsrG yields respectively moniliphenone and 2,2',6'-trihydroxy-4-methyl-6-methoxya-cyldiphenylmethanone. The next steps are the hydroxylation by the FAD-dependent monooxygenase nsrK, followed by isomerization by the monooxygenase nsrQ. The short chain dehydrogenase/reductase nsrO then catalyzes the C-5 ketoreduction to give the xanthone skeleton of blennolide C and 5-acetylblennolide A. The acetyltransferase nsrL has a strict substrate specificity and uses only blennolide A but not blennolide C to yield 5-acetylblennolide A as the single-acetylated product. In the final step of the biosynthesis, the heterodimerization of the 2 xanthones, blennolide C and 5-acetylblennolide A, is catalyzed by the cytochrome P450 monooxygenase nsrP. NsrP can utilize at least three different xanthones as its substrates to perform the dimerization reaction. The sequence is that of Methyltransferase nsrG from Aspergillus novofumigatus (strain IBT 16806).